The chain runs to 452 residues: Bifunctional protein GlmU (452 aa).

Residues 1 to 232 (MTGRSCLTIV…EDEVRGINTK (232 aa)) are pyrophosphorylase. UDP-N-acetyl-alpha-D-glucosamine-binding positions include 11-14 (LAAG), K25, Q78, and 83-84 (GT). D108 is a Mg(2+) binding site. UDP-N-acetyl-alpha-D-glucosamine is bound by residues G144, E158, N173, and N230. N230 lines the Mg(2+) pocket. A linker region spans residues 233 to 253 (AQLAEAEQVMQARLRKEALDA). Positions 254–452 (GVTMVAPDTV…KLLAKKPKTG (199 aa)) are N-acetyltransferase. Positions 319 and 337 each coordinate UDP-N-acetyl-alpha-D-glucosamine. Residue H349 is the Proton acceptor of the active site. UDP-N-acetyl-alpha-D-glucosamine-binding residues include Y352 and N363. Acetyl-CoA contacts are provided by residues A366, 372–373 (NY), S391, S409, and R426.

In the N-terminal section; belongs to the N-acetylglucosamine-1-phosphate uridyltransferase family. The protein in the C-terminal section; belongs to the transferase hexapeptide repeat family. Homotrimer. It depends on Mg(2+) as a cofactor.

It is found in the cytoplasm. The enzyme catalyses alpha-D-glucosamine 1-phosphate + acetyl-CoA = N-acetyl-alpha-D-glucosamine 1-phosphate + CoA + H(+). The catalysed reaction is N-acetyl-alpha-D-glucosamine 1-phosphate + UTP + H(+) = UDP-N-acetyl-alpha-D-glucosamine + diphosphate. The protein operates within nucleotide-sugar biosynthesis; UDP-N-acetyl-alpha-D-glucosamine biosynthesis; N-acetyl-alpha-D-glucosamine 1-phosphate from alpha-D-glucosamine 6-phosphate (route II): step 2/2. It functions in the pathway nucleotide-sugar biosynthesis; UDP-N-acetyl-alpha-D-glucosamine biosynthesis; UDP-N-acetyl-alpha-D-glucosamine from N-acetyl-alpha-D-glucosamine 1-phosphate: step 1/1. It participates in bacterial outer membrane biogenesis; LPS lipid A biosynthesis. In terms of biological role, catalyzes the last two sequential reactions in the de novo biosynthetic pathway for UDP-N-acetylglucosamine (UDP-GlcNAc). The C-terminal domain catalyzes the transfer of acetyl group from acetyl coenzyme A to glucosamine-1-phosphate (GlcN-1-P) to produce N-acetylglucosamine-1-phosphate (GlcNAc-1-P), which is converted into UDP-GlcNAc by the transfer of uridine 5-monophosphate (from uridine 5-triphosphate), a reaction catalyzed by the N-terminal domain. This is Bifunctional protein GlmU from Nitrobacter hamburgensis (strain DSM 10229 / NCIMB 13809 / X14).